Reading from the N-terminus, the 325-residue chain is tRNA(Ile)-lysidine synthase (325 aa).

34–39 (SGGADS) serves as a coordination point for ATP.

It belongs to the tRNA(Ile)-lysidine synthase family.

It localises to the cytoplasm. The enzyme catalyses cytidine(34) in tRNA(Ile2) + L-lysine + ATP = lysidine(34) in tRNA(Ile2) + AMP + diphosphate + H(+). Its function is as follows. Ligates lysine onto the cytidine present at position 34 of the AUA codon-specific tRNA(Ile) that contains the anticodon CAU, in an ATP-dependent manner. Cytidine is converted to lysidine, thus changing the amino acid specificity of the tRNA from methionine to isoleucine. This Rhodococcus opacus (strain B4) protein is tRNA(Ile)-lysidine synthase.